The following is a 186-amino-acid chain: Elongation factor P (186 aa).

This sequence belongs to the elongation factor P family.

It is found in the cytoplasm. The protein operates within protein biosynthesis; polypeptide chain elongation. In terms of biological role, involved in peptide bond synthesis. Stimulates efficient translation and peptide-bond synthesis on native or reconstituted 70S ribosomes in vitro. Probably functions indirectly by altering the affinity of the ribosome for aminoacyl-tRNA, thus increasing their reactivity as acceptors for peptidyl transferase. In Polynucleobacter necessarius subsp. necessarius (strain STIR1), this protein is Elongation factor P.